A 175-amino-acid chain; its full sequence is DM domain-containing protein mab-23 (175 aa).

The DM DNA-binding region spans 8-56; the sequence is CQLCANHGIFNQPKKGHKQKCPYRTCPCSLCALNTKRRALDQIERQLKH. Positions 58 to 93 are disordered; sequence NEPMTGQTATSMASPTPECPLSPTTPKMTPHTPTSG. Polar residues predominate over residues 59–71; the sequence is EPMTGQTATSMAS. Low complexity predominate over residues 81-91; that stretch reads TTPKMTPHTPT.

As to expression, expressed in a limited number of non-sex-specific tissues in males, including 6-8 unidentified neurons of the head, ventral body wall muscle, and the PHCL/R neurons.

It is found in the nucleus. Probable transcription factor that plays a role in the development of the dopaminergic neurons of the male-specific genital sensilla (simple sense organs) known as rays, by negatively regulating the activity of the transcription factor ast-1. Involved in male mating behavior, probably as a result of a role in the differentiation of male-specific diagonal muscles. Required for development of the male proctodeum. May be dispensable in hermaphrodites. This is DM domain-containing protein mab-23 from Caenorhabditis elegans.